A 236-amino-acid polypeptide reads, in one-letter code: MQHNTNVDPQEIAKFERMAETWWDLNGEFKPLHLLNPLRLNYIDQTAGGIFGKKVLDVGCGGGILSESMARIGAEVDGLDMGEEPLEVARLHALETGVNITYVKNTAEAHSQDHQGYYDVVTCMEMLEHVPNPQSVIKACCDMVKPGGFVFFSTINRNLRSYVETILGAEYLLKMLPVGTHDHNKFIKPSELIELVDNTDLICKDAVGITYNPLTGIFKYTPRVDVNYMIATQKVD.

4 residues coordinate S-adenosyl-L-methionine: R39, G59, D80, and M124.

Belongs to the methyltransferase superfamily. UbiG/COQ3 family.

It carries out the reaction a 3-demethylubiquinol + S-adenosyl-L-methionine = a ubiquinol + S-adenosyl-L-homocysteine + H(+). It catalyses the reaction a 3-(all-trans-polyprenyl)benzene-1,2-diol + S-adenosyl-L-methionine = a 2-methoxy-6-(all-trans-polyprenyl)phenol + S-adenosyl-L-homocysteine + H(+). Its pathway is cofactor biosynthesis; ubiquinone biosynthesis. O-methyltransferase that catalyzes the 2 O-methylation steps in the ubiquinone biosynthetic pathway. The polypeptide is Ubiquinone biosynthesis O-methyltransferase (Shewanella putrefaciens (strain CN-32 / ATCC BAA-453)).